A 662-amino-acid polypeptide reads, in one-letter code: UvrABC system protein B (662 aa).

Residues lysine 25 to arginine 182 enclose the Helicase ATP-binding domain. Glycine 38–threonine 45 contributes to the ATP binding site. A Beta-hairpin motif is present at residues tyrosine 91–isoleucine 114. The Helicase C-terminal domain maps to glutamine 429–isoleucine 595. The 36-residue stretch at aspartate 622–aspartate 657 folds into the UVR domain.

Belongs to the UvrB family. Forms a heterotetramer with UvrA during the search for lesions. Interacts with UvrC in an incision complex.

It localises to the cytoplasm. In terms of biological role, the UvrABC repair system catalyzes the recognition and processing of DNA lesions. A damage recognition complex composed of 2 UvrA and 2 UvrB subunits scans DNA for abnormalities. Upon binding of the UvrA(2)B(2) complex to a putative damaged site, the DNA wraps around one UvrB monomer. DNA wrap is dependent on ATP binding by UvrB and probably causes local melting of the DNA helix, facilitating insertion of UvrB beta-hairpin between the DNA strands. Then UvrB probes one DNA strand for the presence of a lesion. If a lesion is found the UvrA subunits dissociate and the UvrB-DNA preincision complex is formed. This complex is subsequently bound by UvrC and the second UvrB is released. If no lesion is found, the DNA wraps around the other UvrB subunit that will check the other stand for damage. The chain is UvrABC system protein B from Clostridium botulinum (strain 657 / Type Ba4).